A 433-amino-acid chain; its full sequence is Serine--tRNA ligase (433 aa).

235-237 (TSE) is a binding site for L-serine. 266-268 (RSE) serves as a coordination point for ATP. L-serine is bound at residue Glu-289. 353–356 (EISS) lines the ATP pocket. Ser-388 contacts L-serine.

This sequence belongs to the class-II aminoacyl-tRNA synthetase family. Type-1 seryl-tRNA synthetase subfamily. In terms of assembly, homodimer. The tRNA molecule binds across the dimer.

It is found in the cytoplasm. It catalyses the reaction tRNA(Ser) + L-serine + ATP = L-seryl-tRNA(Ser) + AMP + diphosphate + H(+). It carries out the reaction tRNA(Sec) + L-serine + ATP = L-seryl-tRNA(Sec) + AMP + diphosphate + H(+). The protein operates within aminoacyl-tRNA biosynthesis; selenocysteinyl-tRNA(Sec) biosynthesis; L-seryl-tRNA(Sec) from L-serine and tRNA(Sec): step 1/1. Catalyzes the attachment of serine to tRNA(Ser). Is also able to aminoacylate tRNA(Sec) with serine, to form the misacylated tRNA L-seryl-tRNA(Sec), which will be further converted into selenocysteinyl-tRNA(Sec). The chain is Serine--tRNA ligase from Burkholderia vietnamiensis (strain G4 / LMG 22486) (Burkholderia cepacia (strain R1808)).